Reading from the N-terminus, the 1107-residue chain is Voltage-gated delayed rectifier potassium channel KCNH8 (1107 aa).

Topologically, residues 1 to 225 are cytoplasmic; sequence MPVMKGLLAP…HFSTFKAGWD (225 aa). Residues 18 to 90 enclose the PAS domain; that stretch reads IATRFDGTHS…LQIEKSLEEK (73 aa). A PAC domain is found at 93-145; the sequence is FKGEIMFYKKNGSPFWCLLDIVPIKNEKGDVVLFLASFKDITDTKVKITPEDK. The helical transmembrane segment at 226–246 threads the bilayer; it reads WLILLATFYVAVTVPYNVCFI. Residues 247-255 lie on the Extracellular side of the membrane; that stretch reads GNDDLSTTR. The chain crosses the membrane as a helical span at residues 256 to 276; sequence STTVSDIAVEILFIIDIILNF. Over 277 to 298 the chain is Cytoplasmic; the sequence is RTTYVSKSGQVIFEARSICIHY. A helical transmembrane segment spans residues 299-319; that stretch reads VTTWFIIDLIAALPFDLLYAF. Asn320 carries an N-linked (GlcNAc...) asparagine glycan. The Extracellular portion of the chain corresponds to 320-327; sequence NVTVVSLV. A helical; Voltage-sensor transmembrane segment spans residues 328–348; sequence HLLKTVRLLRLLRLLQKLDRY. The Cytoplasmic segment spans residues 349 to 357; sequence SQHSTIVLT. A helical transmembrane segment spans residues 358–378; the sequence is LLMSMFALLAHWMACIWYVIG. Residues 379–419 lie on the Extracellular side of the membrane; the sequence is KMEREDNSLLKWEVGWLHELGKRLESPYYGNNTLGGPSIRS. Asn409 carries N-linked (GlcNAc...) asparagine glycosylation. Positions 420–440 form an intramembrane region, pore-forming; sequence AYIAALYFTLSSLTSVGFGNV. A Selectivity filter motif is present at residues 434 to 439; it reads SVGFGN. At 441–448 the chain is on the extracellular side; the sequence is SANTDAEK. A helical membrane pass occupies residues 449–469; that stretch reads IFSICTMLIGALMHALVFGNV. The Cytoplasmic segment spans residues 470 to 1107; sequence TAIIQRMYSR…EVKDNKAINV (638 aa). The cNMP-binding domain stretch occupies residues 551-668; sequence LFECASRGCL…HKFVEDIQHD (118 aa). Residues 686-702 are compositionally biased toward polar residues; it reads SNKSMVSQSEPKGNGNI. 4 disordered regions span residues 686 to 742, 764 to 791, 818 to 847, and 961 to 989; these read SNKS…NKKV, HSPIRVSRSNSPKTKQEIDPPNHNKRKE, EDGNSSEESQTFDFGSERIRSEPRISPPLG, and VDPSSVGSSPQRTGAHEQNPADSELYHSP. A compositionally biased stretch (acidic residues) spans 710–724; sequence VEDEEEEEEGEEEEA. Residues 961-972 are compositionally biased toward polar residues; the sequence is VDPSSVGSSPQR.

It belongs to the potassium channel family. H (Eag) (TC 1.A.1.20) subfamily. Kv12.1/KCNH8 sub-subfamily. As to quaternary structure, the potassium channel is probably composed of a homo- or heterotetrameric complex of pore-forming alpha subunits that can associate with modulating beta subunits. Primarily expressed in the nervous system.

The protein resides in the membrane. The enzyme catalyses K(+)(in) = K(+)(out). Its function is as follows. Pore-forming (alpha) subunit of a voltage-gated delayed rectifier potassium channel that mediates outward-rectifying potassium currents. Elicits a slowly activating, non-inactivating and slowly deactivation outwards potassium current at depolarizating voltages from -30 mV to +50mV. Shows no obvious change in the activation rate from different holding potentials. Activation is strongly dependent on the pH of the external solution. This chain is Voltage-gated delayed rectifier potassium channel KCNH8, found in Homo sapiens (Human).